Here is a 476-residue protein sequence, read N- to C-terminus: UDP-N-acetylmuramate--L-alanine ligase (476 aa).

Residue 121–127 (GAHGKTT) participates in ATP binding.

This sequence belongs to the MurCDEF family.

Its subcellular location is the cytoplasm. The enzyme catalyses UDP-N-acetyl-alpha-D-muramate + L-alanine + ATP = UDP-N-acetyl-alpha-D-muramoyl-L-alanine + ADP + phosphate + H(+). It participates in cell wall biogenesis; peptidoglycan biosynthesis. Cell wall formation. This chain is UDP-N-acetylmuramate--L-alanine ligase, found in Clavibacter sepedonicus (Clavibacter michiganensis subsp. sepedonicus).